Reading from the N-terminus, the 41-residue chain is Probable cinnamyl alcohol dehydrogenase 2 (41 aa).

It belongs to the zinc-containing alcohol dehydrogenase family. Zn(2+) serves as cofactor.

It carries out the reaction (E)-cinnamyl alcohol + NADP(+) = (E)-cinnamaldehyde + NADPH + H(+). The catalysed reaction is (E)-coniferol + NADP(+) = (E)-coniferaldehyde + NADPH + H(+). The enzyme catalyses (E)-sinapyl alcohol + NADP(+) = (E)-sinapaldehyde + NADPH + H(+). It catalyses the reaction (E)-4-coumaroyl alcohol + NADP(+) = (E)-4-coumaraldehyde + NADPH + H(+). It carries out the reaction (E)-caffeyl alcohol + NADP(+) = (E)-caffeyl aldehyde + NADPH + H(+). It participates in aromatic compound metabolism; phenylpropanoid biosynthesis. Involved in lignin biosynthesis. Catalyzes the final step specific for the production of lignin monomers, like coniferyl alcohol, sinapyl alcohol and 4-coumaryl alcohol. This chain is Probable cinnamyl alcohol dehydrogenase 2, found in Pseudotsuga menziesii (Douglas-fir).